The primary structure comprises 119 residues: MARVKRGVVARRSHKKVLKAAKGYYGARSRVFRVAKQAVIKAGQYAYRDRRNKKRNFRALWITRINAQSRAEGMSYSRLIAGLKKAEITLDRRVLADLAIHDKPAFAAIVAKAKDALAA.

This sequence belongs to the bacterial ribosomal protein bL20 family.

Functionally, binds directly to 23S ribosomal RNA and is necessary for the in vitro assembly process of the 50S ribosomal subunit. It is not involved in the protein synthesizing functions of that subunit. This chain is Large ribosomal subunit protein bL20, found in Teredinibacter turnerae (strain ATCC 39867 / T7901).